Reading from the N-terminus, the 317-residue chain is Cell division protein FtsQ (317 aa).

The Cytoplasmic portion of the chain corresponds to 1 to 63 (MDGGGRFVFA…RIHIPAHTGT (63 aa)). A helical transmembrane segment spans residues 64–82 (ISAVAFYAMIGLYGMSLGG). The Periplasmic portion of the chain corresponds to 83-317 (HTNIVTQTTT…KALKKAEKNT (235 aa)). The region spanning 97 to 165 (FAVEDVKVSG…KTVEVRLKER (69 aa)) is the POTRA domain.

Belongs to the FtsQ/DivIB family. FtsQ subfamily.

It localises to the cell inner membrane. In terms of biological role, essential cell division protein. This is Cell division protein FtsQ from Agrobacterium fabrum (strain C58 / ATCC 33970) (Agrobacterium tumefaciens (strain C58)).